Consider the following 1278-residue polypeptide: Sterol regulatory element-binding protein cleavage-activating protein (1278 aa).

At 1-18 the chain is on the cytoplasmic side; that stretch reads MTLTERLREKISQAFYNH. A helical membrane pass occupies residues 19 to 39; sequence GLFCASYPIPIILFTGLCILA. At 40 to 279 the chain is on the lumenal side; the sequence is CCYPLLKLPL…SLVHVHFKEE (240 aa). The tract at residues 46-284 is loop-1; it reads KLPLPGTGPV…HFKEEIGIAE (239 aa). The interval 60–80 is disordered; it reads PVKDYSPPPLTSDHKPGEPNE. Asparagine 263 carries N-linked (GlcNAc...) asparagine glycosylation. A helical transmembrane segment spans residues 280–300; the sequence is IGIAELIPLVTTYIILFAYIY. In terms of domain architecture, SSD spans 284–442; the sequence is ELIPLVTTYI…MLFFTTVLSI (159 aa). At 301-312 the chain is on the cytoplasmic side; it reads FSTRKIDMVKSK. Residues 313–333 form a helical membrane-spanning segment; it reads WGLALAAVVTVLSSLLMSVGL. The Lumenal portion of the chain corresponds to 334–344; that stretch reads CTLFGLTPTLN. A helical transmembrane segment spans residues 345 to 365; that stretch reads GGEIFPYLVVVIGLENVLVLT. The Cytoplasmic segment spans residues 366–401; it reads KSVVSTPVDLEVKLRIAQGLSSESWSIMKNMATELG. Residues 402-422 form a helical membrane-spanning segment; sequence IVLIGYFTLVPAIQEFCLFAV. Residue valine 423 is a topological domain, lumenal. A helical transmembrane segment spans residues 424–444; that stretch reads GLVSDFFLQMLFFTTVLSIDI. Topologically, residues 445-518 are cytoplasmic; sequence RRMELADLNK…FLARTRLAQR (74 aa). Residues 447 to 452 carry the ER export signal motif; it reads MELADL. Glycyl lysine isopeptide (Lys-Gly) (interchain with G-Cter in ubiquitin) cross-links involve residues lysine 454 and lysine 466. A helical membrane pass occupies residues 519 to 539; sequence LIMAGTVVWIGILVYTDPAGL. Positions 535–710 are loop-7; sequence DPAGLRTYLA…QAQRDLTLYK (176 aa). Topologically, residues 540–707 are lumenal; that stretch reads RTYLAAQVTE…GTAQAQRDLT (168 aa). The disordered stretch occupies residues 581 to 618; it reads PPDASKLPENQTLPGEPPEPGGLAEGVHDSPAPEVTWG. 2 N-linked (GlcNAc...) asparagine glycosylation sites follow: asparagine 590 and asparagine 641. Residues 668–696 form a disordered region; it reads EGRHPQDGRSAWPPPRPGQGGLWEAGPKG. The chain crosses the membrane as a helical span at residues 708–728; that stretch reads LYKVAALGLASGIVLVLLLLC. Topologically, residues 729–1278 are cytoplasmic; the sequence is LYRVLCPRNY…YVPSVLEKLD (550 aa). The interval 731-1278 is interaction with SREBF2; the sequence is RVLCPRNYGQ…YVPSVLEKLD (548 aa). The WD 1 repeat unit spans residues 771-811; that stretch reads VLRGHLMDIECLASDGMLLVSCCLAGHVCVWDAQTGDCLTR. Phosphoserine is present on residues serine 821, serine 837, serine 850, serine 905, and serine 935. Positions 834-904 are disordered; sequence ERLSDGGKGG…RYRAGRRAQD (71 aa). WD repeat units lie at residues 951–1001 and 1004–1041; these read PPEK…LRCS and EVSSGITALVFLDRRIVAARLNGSLDFFSLETHTALSP. The residue at position 1050 (arginine 1050) is an Omega-N-methylarginine. WD repeat units lie at residues 1076 to 1113, 1116 to 1154, 1157 to 1194, and 1196 to 1234; these read AHQKPITALKAAAGRLVTGSQDHTLRVFRLEDSCCLFT, GHSGAITTVYIDQTMVLASGGQDGAICLWDVLTGSRVSH, AHRGDVTSLTCTTSCVISSGLDDLISIWDRSTGIKLYS, and QQDLGCGASLGVISDNLLVTGGQGCVSFWDLNYGDLLQT.

The protein belongs to the WD repeat SCAP family. In terms of assembly, membrane region forms a homotetramer. Component of the SCAP-SREBP complex (composed of SCAP and SREBF1/SREBP1 or SREBF2/SREBP2); interacts with SREBF1/SREBP1 or SREBF2/SREBP2 through its C-terminal cytoplasmic domain. Forms a ternary complex with INSIG1 or INSIG2 through its transmembrane domains at high sterol concentrations. Interacts with PAQR3; the interaction anchors the SCAP-SREBP complex to the Golgi apparatus in low cholesterol conditions. Interacts with the SEC23-SEC24 complex in a SAR1-GTP-dependent manner through an ER export signal in its third cytoplasmic loop. Interacts with RNF139; the interaction inhibits the interaction of SCAP with SEC24B and hampering the ER to Golgi transport of the SCAP-SREBP complex. Interacts with SPRING1. Ubiquitinated at Lys-454 and Lys-466. RNF145 triggers ubiquitination of SCAP, likely inhibiting SCAP-SREBP complex transport to the Golgi apparatus and the subsequent processing/maturation of SREBF2/SREBP2.

It localises to the endoplasmic reticulum membrane. Its subcellular location is the golgi apparatus membrane. It is found in the cytoplasmic vesicle. The protein localises to the COPII-coated vesicle membrane. Its function is as follows. Escort protein required for cholesterol as well as lipid homeostasis. Regulates export of the SCAP-SREBP complex from the endoplasmic reticulum to the Golgi upon low cholesterol, thereby regulating the processing of sterol regulatory element-binding proteins (SREBPs) SREBF1/SREBP1 and SREBF2/SREBP2. At high sterol concentrations, formation of a ternary complex with INSIG (INSIG1 or INSIG2) leads to mask the ER export signal in SCAP, promoting retention of the complex in the endoplasmic reticulum. Low sterol concentrations trigger release of INSIG, a conformational change in the SSD domain of SCAP, unmasking of the ER export signal, promoting recruitment into COPII-coated vesicles and transport of the SCAP-SREBP to the Golgi: in the Golgi, SREBPs are then processed, releasing the transcription factor fragment of SREBPs from the membrane, its import into the nucleus and up-regulation of LDLR, INSIG1 and the mevalonate pathway. Binds cholesterol via its SSD domain. The protein is Sterol regulatory element-binding protein cleavage-activating protein of Bos taurus (Bovine).